Reading from the N-terminus, the 402-residue chain is Tol-Pal system protein TolB (402 aa).

Positions 1-17 (MKKIVAIFLVFLGSLWA) are cleaved as a signal peptide.

Belongs to the TolB family. In terms of assembly, the Tol-Pal system is composed of five core proteins: the inner membrane proteins TolA, TolQ and TolR, the periplasmic protein TolB and the outer membrane protein Pal. They form a network linking the inner and outer membranes and the peptidoglycan layer.

It is found in the periplasm. Its function is as follows. Part of the Tol-Pal system, which plays a role in outer membrane invagination during cell division and is important for maintaining outer membrane integrity. The chain is Tol-Pal system protein TolB from Campylobacter jejuni subsp. jejuni serotype O:2 (strain ATCC 700819 / NCTC 11168).